A 192-amino-acid chain; its full sequence is Pyridoxal 5'-phosphate synthase subunit PdxT (192 aa).

Residue 50–52 (GES) participates in L-glutamine binding. The active-site Nucleophile is the cysteine 82. L-glutamine is bound by residues arginine 109 and 136–137 (IR). Residues histidine 172 and glutamate 174 each act as charge relay system in the active site.

It belongs to the glutaminase PdxT/SNO family. In the presence of PdxS, forms a dodecamer of heterodimers. Only shows activity in the heterodimer.

It catalyses the reaction aldehydo-D-ribose 5-phosphate + D-glyceraldehyde 3-phosphate + L-glutamine = pyridoxal 5'-phosphate + L-glutamate + phosphate + 3 H2O + H(+). It carries out the reaction L-glutamine + H2O = L-glutamate + NH4(+). The protein operates within cofactor biosynthesis; pyridoxal 5'-phosphate biosynthesis. In terms of biological role, catalyzes the hydrolysis of glutamine to glutamate and ammonia as part of the biosynthesis of pyridoxal 5'-phosphate. The resulting ammonia molecule is channeled to the active site of PdxS. The polypeptide is Pyridoxal 5'-phosphate synthase subunit PdxT (Haemophilus influenzae (strain PittGG)).